The following is a 616-amino-acid chain: Glucoamylase P (616 aa).

The signal sequence occupies residues 1 to 29 (MRLLPSSCAGALSLLCSLAIAAPTELKAR). Trp149 is a substrate binding site. Asn200 carries N-linked (GlcNAc...) asparagine glycosylation. Asp205 functions as the Proton acceptor in the catalytic mechanism. The active-site Proton donor is Glu208. The N-linked (GlcNAc...) asparagine glycan is linked to Asn427. One can recognise a CBM20 domain in the interval 501 to 608 (VTSSCQVSIT…AVTTDDAWMG (108 aa)).

It belongs to the glycosyl hydrolase 15 family.

The protein localises to the secreted. The enzyme catalyses Hydrolysis of terminal (1-&gt;4)-linked alpha-D-glucose residues successively from non-reducing ends of the chains with release of beta-D-glucose.. The polypeptide is Glucoamylase P (GAMP) (Amorphotheca resinae (Creosote fungus)).